Reading from the N-terminus, the 239-residue chain is Cytochrome b6-f complex iron-sulfur subunit 1, cyanelle (239 aa).

Residues 1–60 (MAFTTTAVVAPRGAKITGQSSTCAIQNGKTVAVGTSKQVGSFKPVFAAAKPAKETTFSVS) constitute a cyanelle transit peptide. The helical transmembrane segment at 81–101 (LLGAIAGPVAGAGGPFVSFLV) threads the bilayer. Residues 125 to 221 (VSSWLETHKP…VSVLEDGVVA (97 aa)) enclose the Rieske domain. 4 residues coordinate [2Fe-2S] cluster: Cys-167, His-169, Cys-185, and His-188. Cys-172 and Cys-187 are oxidised to a cystine.

Belongs to the Rieske iron-sulfur protein family. As to quaternary structure, the 4 large subunits of the cytochrome b6-f complex are cytochrome b6, subunit IV (17 kDa polypeptide, petD), cytochrome f and the Rieske protein, while the 4 small subunits are petG, petL, petM and petN. The complex functions as a dimer. Requires [2Fe-2S] cluster as cofactor.

It is found in the plastid. The protein resides in the cyanelle thylakoid membrane. It catalyses the reaction 2 oxidized [plastocyanin] + a plastoquinol + 2 H(+)(in) = 2 reduced [plastocyanin] + a plastoquinone + 4 H(+)(out). In terms of biological role, component of the cytochrome b6-f complex, which mediates electron transfer between photosystem II (PSII) and photosystem I (PSI), cyclic electron flow around PSI, and state transitions. The chain is Cytochrome b6-f complex iron-sulfur subunit 1, cyanelle (petC-1) from Cyanophora paradoxa.